The sequence spans 472 residues: L-fuculokinase (472 aa).

It belongs to the FGGY kinase family. A divalent metal cation is required as a cofactor.

The catalysed reaction is L-fuculose + ATP = L-fuculose 1-phosphate + ADP + H(+). It functions in the pathway carbohydrate degradation; L-fucose degradation; L-lactaldehyde and glycerone phosphate from L-fucose: step 2/3. Catalyzes the phosphorylation of L-fuculose. Can also phosphorylate, with lower efficiency, D-ribulose, D-xylulose and D-fructose. The sequence is that of L-fuculokinase from Escherichia coli (strain K12).